A 660-amino-acid chain; its full sequence is Integrator complex subunit 9 homolog (660 aa).

It belongs to the metallo-beta-lactamase superfamily. RNA-metabolizing metallo-beta-lactamase-like family. INTS9 subfamily. Component of the Integrator complex. The core complex associates with protein phosphatase 2A subunits, to form the Integrator-PP2A (INTAC) complex.

It is found in the nucleus. The protein localises to the cytoplasm. In terms of biological role, component of the integrator complex, a multiprotein complex that terminates RNA polymerase II (Pol II) transcription in the promoter-proximal region of genes. The integrator complex provides a quality checkpoint during transcription elongation by driving premature transcription termination of transcripts that are unfavorably configured for transcriptional elongation: the complex terminates transcription by (1) catalyzing dephosphorylation of the C-terminal domain (CTD) of Pol II subunit polr2a, (2) degrading the exiting nascent RNA transcript via endonuclease activity and (3) promoting the release of Pol II from bound DNA. The integrator complex is also involved in terminating the synthesis of non-coding Pol II transcripts, such as enhancer RNAs (eRNAs), small nuclear RNAs (snRNAs), telomerase RNAs and long non-coding RNAs (lncRNAs). This chain is Integrator complex subunit 9 homolog (ints9), found in Nematostella vectensis (Starlet sea anemone).